The following is a 711-amino-acid chain: Polyribonucleotide nucleotidyltransferase (711 aa).

Mg(2+)-binding residues include Asp486 and Asp492. Positions 553 to 612 constitute a KH domain; the sequence is PRIHTIKINPDKIKDVIGKGGSVIRALTEETGTTIEIEDDGTVKIAATDGEKAKHAIRRI. Positions 622 to 690 constitute an S1 motif domain; that stretch reads GRVYTGKVTR…RQGRIRLSIK (69 aa). Residues 690–711 are disordered; it reads KEATEQSQPAAAPEAPAAEQGE. The segment covering 694–711 has biased composition (low complexity); the sequence is EQSQPAAAPEAPAAEQGE.

It belongs to the polyribonucleotide nucleotidyltransferase family. In terms of assembly, component of the RNA degradosome, which is a multiprotein complex involved in RNA processing and mRNA degradation. The cofactor is Mg(2+).

It localises to the cytoplasm. It catalyses the reaction RNA(n+1) + phosphate = RNA(n) + a ribonucleoside 5'-diphosphate. Its function is as follows. Involved in mRNA degradation. Catalyzes the phosphorolysis of single-stranded polyribonucleotides processively in the 3'- to 5'-direction. This Shigella dysenteriae serotype 1 (strain Sd197) protein is Polyribonucleotide nucleotidyltransferase.